Consider the following 153-residue polypeptide: Regulatory protein RecX (153 aa).

Belongs to the RecX family.

It localises to the cytoplasm. Modulates RecA activity. The polypeptide is Regulatory protein RecX (Neisseria gonorrhoeae (strain ATCC 700825 / FA 1090)).